The following is a 123-amino-acid chain: Large ribosomal subunit protein bL17 (123 aa).

It belongs to the bacterial ribosomal protein bL17 family. In terms of assembly, part of the 50S ribosomal subunit. Contacts protein L32.

This Dichelobacter nodosus (strain VCS1703A) protein is Large ribosomal subunit protein bL17.